We begin with the raw amino-acid sequence, 244 residues long: Ribonuclease 3 (244 aa).

One can recognise an RNase III domain in the interval 5–136 (LAELERAIGI…LVGAIYLDQG (132 aa)). Glu49 provides a ligand contact to Mg(2+). Asp53 is a catalytic residue. 2 residues coordinate Mg(2+): Asp122 and Glu125. Residue Glu125 is part of the active site. In terms of domain architecture, DRBM spans 161–229 (DPTTRLQELM…ARKALAAWDK (69 aa)).

Belongs to the ribonuclease III family. In terms of assembly, homodimer. It depends on Mg(2+) as a cofactor.

The protein resides in the cytoplasm. It carries out the reaction Endonucleolytic cleavage to 5'-phosphomonoester.. Digests double-stranded RNA. Involved in the processing of primary rRNA transcript to yield the immediate precursors to the large and small rRNAs (23S and 16S). Processes some mRNAs, and tRNAs when they are encoded in the rRNA operon. Processes pre-crRNA and tracrRNA of type II CRISPR loci if present in the organism. The protein is Ribonuclease 3 of Chloroflexus aurantiacus (strain ATCC 29364 / DSM 637 / Y-400-fl).